The following is a 218-amino-acid chain: Outer-membrane lipoprotein LolB (218 aa).

The signal sequence occupies residues 1-24 (MNNLSYLTKIPLIWVLLSVTLLSA). Residue cysteine 25 is the site of N-palmitoyl cysteine attachment. Residue cysteine 25 is the site of S-diacylglycerol cysteine attachment.

Belongs to the LolB family. In terms of assembly, monomer.

Its subcellular location is the cell outer membrane. Plays a critical role in the incorporation of lipoproteins in the outer membrane after they are released by the LolA protein. This chain is Outer-membrane lipoprotein LolB, found in Shewanella sediminis (strain HAW-EB3).